A 71-amino-acid polypeptide reads, in one-letter code: uncharacterized protein (71 aa).

Residues 2 to 24 form a helical membrane-spanning segment; sequence IIAIVAVVIFLLNFLTPYGYMPM. The tract at residues 48–71 is disordered; it reads PAESSSNGGSMITKPSTGACQGGR. Residues 49–71 show a composition bias toward polar residues; that stretch reads AESSSNGGSMITKPSTGACQGGR.

The protein localises to the membrane. This is an uncharacterized protein from Archaeoglobus fulgidus (strain ATCC 49558 / DSM 4304 / JCM 9628 / NBRC 100126 / VC-16).